The following is a 184-amino-acid chain: Large ribosomal subunit protein uL6 (184 aa).

It belongs to the universal ribosomal protein uL6 family. Part of the 50S ribosomal subunit.

Functionally, this protein binds to the 23S rRNA, and is important in its secondary structure. It is located near the subunit interface in the base of the L7/L12 stalk, and near the tRNA binding site of the peptidyltransferase center. This Thermotoga maritima (strain ATCC 43589 / DSM 3109 / JCM 10099 / NBRC 100826 / MSB8) protein is Large ribosomal subunit protein uL6.